Here is a 252-residue protein sequence, read N- to C-terminus: Trypsin iota (252 aa).

A signal peptide spans 1–19 (MAVYGIVATVLVLLLLGDA). A propeptide spans 20–27 (SDVEATGR) (activation peptide). The Peptidase S1 domain occupies 28 to 250 (IIGGSDQLIR…LRPWIVKAAN (223 aa)). Cys-53 and Cys-69 are joined by a disulfide. Residues His-68 and Asp-113 each act as charge relay system in the active site. Cystine bridges form between Cys-175/Cys-193 and Cys-202/Cys-226. Ser-206 serves as the catalytic Charge relay system.

This sequence belongs to the peptidase S1 family.

The protein resides in the secreted. The protein localises to the extracellular space. It catalyses the reaction Preferential cleavage: Arg-|-Xaa, Lys-|-Xaa.. This Drosophila melanogaster (Fruit fly) protein is Trypsin iota (iotaTry).